The sequence spans 91 residues: MSITTERKQKLIKEYAITENDTGSSAVQCAILTERINNLTEHFKSNHKDHTSRRGLLILVGRRRRLLNYIKKNNVSKYLDLISKLGIRKIK.

The protein belongs to the universal ribosomal protein uS15 family. As to quaternary structure, part of the 30S ribosomal subunit. Forms a bridge to the 50S subunit in the 70S ribosome, contacting the 23S rRNA.

Its function is as follows. One of the primary rRNA binding proteins, it binds directly to 16S rRNA where it helps nucleate assembly of the platform of the 30S subunit by binding and bridging several RNA helices of the 16S rRNA. Functionally, forms an intersubunit bridge (bridge B4) with the 23S rRNA of the 50S subunit in the ribosome. This chain is Small ribosomal subunit protein uS15, found in Rickettsia peacockii (strain Rustic).